Here is a 246-residue protein sequence, read N- to C-terminus: Large ribosomal subunit protein uL3 (246 aa).

2 disordered regions span residues 140–162 (SHRSIGSTGGRQDPGKTFKNKKM) and 215–246 (DVPLPGKFRENGSAGASQVEAAPEAPASEENA). Gln151 carries the post-translational modification N5-methylglutamine. A compositionally biased stretch (low complexity) spans 234-246 (EAAPEAPASEENA).

The protein belongs to the universal ribosomal protein uL3 family. Part of the 50S ribosomal subunit. Forms a cluster with proteins L14 and L19. Methylated by PrmB.

In terms of biological role, one of the primary rRNA binding proteins, it binds directly near the 3'-end of the 23S rRNA, where it nucleates assembly of the 50S subunit. This is Large ribosomal subunit protein uL3 from Methylorubrum extorquens (strain PA1) (Methylobacterium extorquens).